A 510-amino-acid polypeptide reads, in one-letter code: Serine/threonine protein phosphatase 2A 57 kDa regulatory subunit B' kappa isoform (510 aa).

Residues 1–51 (MWKGFLSKLPRKTSASGRGADLDSGQCSNGAGNGNPIQRTSSCGSIPSGRS) are disordered. A compositionally biased stretch (polar residues) spans 25–51 (GQCSNGAGNGNPIQRTSSCGSIPSGRS). Phosphothreonine occurs at positions 476 and 493. A Phosphoserine modification is found at serine 502. Position 508 is a phosphothreonine (threonine 508).

Belongs to the phosphatase 2A regulatory subunit B56 family. PP2A consists of a common heteromeric enzyme, composed of a catalytic subunit (subunits C), a constant regulatory subunit (subunit A), and a variety of regulatory subunits such as subunits B (the R2/B/PR55/B55, R3/B''/PR72/PR130/PR59 and R5/B'/B56 families). Interacts with SIT1. Phosphorylated at Thr-476, Thr-493, Ser-502 and Thr-508 by SIT1. In terms of tissue distribution, expressed in root stele and epidermal cells.

It localises to the cytoplasm. It is found in the cytosol. The protein localises to the cell membrane. Functionally, b regulatory subunit of phosphatase 2A (PP2A) involved in salt stress response. Under salt stress conditions, required for the catalytic activity of PP2A and the dephosphorylation of SIT1, a negative regulator of salt tolerance. Dephosphorylation of SIT1 turns off salt-induced SIT1 activity directly, which has a positive effect on salt tolerance. The sequence is that of Serine/threonine protein phosphatase 2A 57 kDa regulatory subunit B' kappa isoform from Oryza sativa subsp. japonica (Rice).